Consider the following 298-residue polypeptide: ATP synthase gamma chain (298 aa).

Belongs to the ATPase gamma chain family. F-type ATPases have 2 components, CF(1) - the catalytic core - and CF(0) - the membrane proton channel. CF(1) has five subunits: alpha(3), beta(3), gamma(1), delta(1), epsilon(1). CF(0) has three main subunits: a, b and c.

The protein localises to the cell inner membrane. Functionally, produces ATP from ADP in the presence of a proton gradient across the membrane. The gamma chain is believed to be important in regulating ATPase activity and the flow of protons through the CF(0) complex. This chain is ATP synthase gamma chain, found in Wolinella succinogenes (strain ATCC 29543 / DSM 1740 / CCUG 13145 / JCM 31913 / LMG 7466 / NCTC 11488 / FDC 602W) (Vibrio succinogenes).